A 118-amino-acid polypeptide reads, in one-letter code: NADH-ubiquinone oxidoreductase chain 3 (118 aa).

A run of 2 helical transmembrane segments spans residues Phe4 to Val24 and Ile87 to Leu107.

It belongs to the complex I subunit 3 family.

It localises to the mitochondrion membrane. The enzyme catalyses a ubiquinone + NADH + 5 H(+)(in) = a ubiquinol + NAD(+) + 4 H(+)(out). Its function is as follows. Core subunit of the mitochondrial membrane respiratory chain NADH dehydrogenase (Complex I) that is believed to belong to the minimal assembly required for catalysis. Complex I functions in the transfer of electrons from NADH to the respiratory chain. The immediate electron acceptor for the enzyme is believed to be ubiquinone. The chain is NADH-ubiquinone oxidoreductase chain 3 (ND3) from Panax ginseng (Korean ginseng).